A 198-amino-acid polypeptide reads, in one-letter code: Methyl-coenzyme M reductase I operon protein C (198 aa).

MCR is composed of three subunits: alpha, beta, and gamma. The function of proteins C and D is not known.

This is Methyl-coenzyme M reductase I operon protein C (mcrC) from Methanothermobacter marburgensis (strain ATCC BAA-927 / DSM 2133 / JCM 14651 / NBRC 100331 / OCM 82 / Marburg) (Methanobacterium thermoautotrophicum).